A 287-amino-acid chain; its full sequence is Protease HtpX (287 aa).

A run of 2 helical transmembrane segments spans residues 4–24 (IFLL…VMSI) and 33–53 (GGLL…SLAI). Histidine 139 serves as a coordination point for Zn(2+). Residue glutamate 140 is part of the active site. Histidine 143 is a binding site for Zn(2+). Helical transmembrane passes span 154–174 (LIQG…AGII) and 195–215 (AVVF…VAYF). Glutamate 220 serves as a coordination point for Zn(2+).

It belongs to the peptidase M48B family. Zn(2+) is required as a cofactor.

It localises to the cell inner membrane. In Shewanella halifaxensis (strain HAW-EB4), this protein is Protease HtpX.